The primary structure comprises 508 residues: MDFSIKACDWTKGSSNGFLTGKSDCIVIGVFESQTLSGAALEIDEATRGLLTRIIKAGDMDGKAGTTLFLHEVSGIGASRVLLVGLGKQDAFNQKAYGDAVRAAWRALLGTKIVQVTFTLAQAPILERTADWGVRAAILALRELTYKFTQMKSKPENAARALKRIVFSVNTGDEKAAKLAAKQGAALANGMDLTRDLGNLPSNVCTPTYLANTAKKLAKDWKLKVEVLGEKQCEALKMGSFLSVTAGSVEPAQFIVLQYQGGAAKAAPVVLVGKGVTFDTGGISLKPGEGMDEMKYDMCGAGSVLGTLRAVAEMGLKLNVVGIIPAVENMPSATATKPGDIVTSMKGLTIEVLNTDAEGRLILCDALTYAERFKPAAVIDIATLTGACIIALGHHNSGLFSKDDALAGELLDASREASDPAWRLPLDDEYQDQLKSNFADLANIGGRPAGSVTAACFLSRFTDAYPWAHLDIAGTAWKSGAAKGATGRPVPLLAQFLIDRAADGRATQ.

Lys274 and Asp279 together coordinate Mn(2+). The active site involves Lys286. 3 residues coordinate Mn(2+): Asp297, Asp356, and Glu358. Arg360 is an active-site residue.

This sequence belongs to the peptidase M17 family. Mn(2+) is required as a cofactor.

Its subcellular location is the cytoplasm. The catalysed reaction is Release of an N-terminal amino acid, Xaa-|-Yaa-, in which Xaa is preferably Leu, but may be other amino acids including Pro although not Arg or Lys, and Yaa may be Pro. Amino acid amides and methyl esters are also readily hydrolyzed, but rates on arylamides are exceedingly low.. It catalyses the reaction Release of an N-terminal amino acid, preferentially leucine, but not glutamic or aspartic acids.. Its function is as follows. Presumably involved in the processing and regular turnover of intracellular proteins. Catalyzes the removal of unsubstituted N-terminal amino acids from various peptides. The protein is Probable cytosol aminopeptidase of Paraburkholderia phytofirmans (strain DSM 17436 / LMG 22146 / PsJN) (Burkholderia phytofirmans).